The sequence spans 651 residues: Acetyl-coenzyme A synthetase (651 aa).

CoA contacts are provided by residues 189 to 192 (RGGK), T311, and N335. ATP is bound by residues 387–389 (GEP), 411–416 (DTWWQT), D500, and R515. Residue S523 coordinates CoA. ATP is bound at residue R526. Mg(2+) is bound by residues V537, H539, and V542. Residue R584 participates in CoA binding. The residue at position 609 (K609) is an N6-acetyllysine.

The protein belongs to the ATP-dependent AMP-binding enzyme family. The cofactor is Mg(2+). Post-translationally, acetylated. Deacetylation by the SIR2-homolog deacetylase activates the enzyme.

The catalysed reaction is acetate + ATP + CoA = acetyl-CoA + AMP + diphosphate. In terms of biological role, catalyzes the conversion of acetate into acetyl-CoA (AcCoA), an essential intermediate at the junction of anabolic and catabolic pathways. AcsA undergoes a two-step reaction. In the first half reaction, AcsA combines acetate with ATP to form acetyl-adenylate (AcAMP) intermediate. In the second half reaction, it can then transfer the acetyl group from AcAMP to the sulfhydryl group of CoA, forming the product AcCoA. The polypeptide is Acetyl-coenzyme A synthetase (Agrobacterium fabrum (strain C58 / ATCC 33970) (Agrobacterium tumefaciens (strain C58))).